The sequence spans 253 residues: Toxin PezT (253 aa).

39–46 contacts ATP; it reads GQSGAGKT. Residue D66 is the Proton acceptor of the active site.

It belongs to the zeta toxin family. As to quaternary structure, forms a PezA(2)PezT(2) heterotetramer. The heterotetramer is much more stable than either of the proteins alone, and a specific mechanism may be necessary to liberate the toxin.

It catalyses the reaction UDP-N-acetyl-alpha-D-glucosamine + ATP = UDP-N-acetyl-alpha-D-glucosamine 3'-phosphate + ADP + H(+). Toxic component of a type II toxin-antitoxin (TA) system. Phosphorylates UDP-N-acetyl-D-glucosamine (UNAG) on the 3'-hydroxyl group of the N-acetyl-D-glucosamine moiety, yielding UNAG-3P. UNAG-3P inhibits MurA, the first committed step in cell wall synthesis, which is then blocked. Upon expression in E.coli results in decreased cell growth and viability, followed 3 hours later by growth restoration; the toxic effect and phosphorylation of UNAG are neutralized by coexpression with cognate antitoxin PezA. A mutant lacking the last 11 residues is stably maintained in E.coli, unlike the wild-type which undergoes spontaneous mutation. Expression of the deletion mutant in rapidly growing liquid cultures leads to cell bulging, permeabilization and massive lysis by 1 hour. Cells that survive are not able to undergo cytokinesis. Expression in slowly growing cells leads to bulging but not lysis. Functionally, acts as a corepressor of its own operon with PezA; it is not clear if it binds DNA alone. This chain is Toxin PezT (pezT), found in Streptococcus pneumoniae serotype 4 (strain ATCC BAA-334 / TIGR4).